The sequence spans 163 residues: Ankyrin repeat domain-containing protein 37 (163 aa).

ANK repeat units follow at residues 29–58, 62–91, and 95–124; these read LGQS…DVNQ, FGEA…RIDM, and DGHT…TQDT. The Nuclear localization signal signature appears at 129–149; it reads QSSLHNLKETAAGVKRGQCCQ.

Its subcellular location is the nucleus. The protein localises to the cytoplasm. The sequence is that of Ankyrin repeat domain-containing protein 37 (ankrd37) from Xenopus tropicalis (Western clawed frog).